The following is a 619-amino-acid chain: Teichoic acid poly(ribitol-phosphate) polymerase (619 aa).

This sequence belongs to the CDP-glycerol glycerophosphotransferase family.

Its subcellular location is the cell membrane. It carries out the reaction 4-O-[1-D-ribitylphospho-(2R)-1-glycerylphospho]-N-acetyl-beta-D-mannosaminyl-(1-&gt;4)-N-acetyl-alpha-D-glucosaminyl di-trans,octa-cis-undecaprenyl diphosphate + n CDP-L-ribitol = 4-O-[(D-ribitylphospho)(n)-D-ribitylphospho-(2R)-glycerylphospho]-N-acetyl-beta-D-mannosaminyl-(1-&gt;4)-N-acetyl-alpha-D-glucosaminyl di-trans,octa-cis-undecaprenyl diphosphate + n CMP + n H(+). The protein operates within cell wall biogenesis; poly(ribitol phosphate) teichoic acid biosynthesis. In terms of biological role, responsible for the polymerization of the main chain of the major teichoic acid by sequential transfer of ribitol phosphate units from CDP-ribitol to the glycerol phosphate attached to the disaccharide linkage unit. Synthesizes polymers of up to 40 ribitol phosphate units in length. This is Teichoic acid poly(ribitol-phosphate) polymerase (tarL) from Bacillus spizizenii (strain ATCC 23059 / NRRL B-14472 / W23) (Bacillus subtilis subsp. spizizenii).